A 105-amino-acid polypeptide reads, in one-letter code: Cell division protein FtsL (105 aa).

Residues 1-24 (MAEKMEKTGQILQMQLKRFSRVEK) are Cytoplasmic-facing. Residues 25–45 (AFYFSIAVTTLIVAISIIFMQ) form a helical membrane-spanning segment. The Extracellular portion of the chain corresponds to 46–105 (TKLLQVQNDLTKINAQIEEKKTELDDAKQEVNELLRAERLKEIANSHDLQLNNENIRIAE).

The protein belongs to the FtsL family.

Its subcellular location is the cell membrane. Essential cell division protein. In Streptococcus pneumoniae (strain ATCC BAA-255 / R6), this protein is Cell division protein FtsL.